Consider the following 185-residue polypeptide: Ribosome-recycling factor (185 aa).

The interval 135 to 159 is disordered; sequence ANDKLKASEKNKEASEDEVKRAQEK.

This sequence belongs to the RRF family.

The protein localises to the cytoplasm. Responsible for the release of ribosomes from messenger RNA at the termination of protein biosynthesis. May increase the efficiency of translation by recycling ribosomes from one round of translation to another. This Moorella thermoacetica (strain ATCC 39073 / JCM 9320) protein is Ribosome-recycling factor.